The chain runs to 332 residues: Ferredoxin--NADP reductase 2 (332 aa).

FAD contacts are provided by Glu37, Gln45, Tyr50, Val90, Phe124, Asp285, and Thr326.

It belongs to the ferredoxin--NADP reductase type 2 family. Homodimer. The cofactor is FAD.

It carries out the reaction 2 reduced [2Fe-2S]-[ferredoxin] + NADP(+) + H(+) = 2 oxidized [2Fe-2S]-[ferredoxin] + NADPH. The polypeptide is Ferredoxin--NADP reductase 2 (Bacillus licheniformis (strain ATCC 14580 / DSM 13 / JCM 2505 / CCUG 7422 / NBRC 12200 / NCIMB 9375 / NCTC 10341 / NRRL NRS-1264 / Gibson 46)).